Reading from the N-terminus, the 148-residue chain is Putative anti-anti-sigma factor Rv2638 (148 aa).

An STAS domain is found at 30 to 141 (LRATTDGSGA…PTVDTALGKG (112 aa)).

This sequence belongs to the anti-sigma-factor antagonist family. Interacts with unphosphorylated OprA.

The protein is Putative anti-anti-sigma factor Rv2638 of Mycobacterium tuberculosis (strain ATCC 25618 / H37Rv).